The sequence spans 460 residues: Lipase member I (460 aa).

A signal peptide spans 1–15; it reads MRVYIFLCLMCWVRS. N-linked (GlcNAc...) asparagine glycosylation is present at Asn63. The active-site Nucleophile is Ser159. The Charge relay system role is filled by Asp183. A disulfide bridge connects residues Cys238 and Cys251. His253 serves as the catalytic Charge relay system. 2 cysteine pairs are disulfide-bonded: Cys275–Cys286 and Cys289–Cys297. Asn396 carries N-linked (GlcNAc...) asparagine glycosylation. Residues Cys436 and Cys455 are joined by a disulfide bond.

This sequence belongs to the AB hydrolase superfamily. Lipase family. As to quaternary structure, interacts with heparin with a high affinity. Expressed in testis. Expressed exclusively at the connecting piece of the sperm.

The protein resides in the cell membrane. It is found in the secreted. It catalyses the reaction 1-hexadecanoyl-2-(9Z-octadecenoyl)-sn-glycero-3-phosphate + H2O = 2-(9Z-octadecenoyl)-sn-glycero-3-phosphate + hexadecanoate + H(+). With respect to regulation, inhibited by sodium vanadate. Its function is as follows. Hydrolyzes specifically phosphatidic acid (PA) to produce 2-acyl lysophosphatidic acid (LPA; a potent bioactive lipid mediator) and fatty acid. Does not hydrolyze other phospholipids, like phosphatidylserine (PS), phosphatidylcholine (PC) and phosphatidylethanolamine (PE) or triacylglycerol (TG). The chain is Lipase member I (LIPI) from Homo sapiens (Human).